The chain runs to 240 residues: Bidirectional sugar transporter SWEET5 (240 aa).

Over 1–9 (MTDPHTART) the chain is Extracellular. A helical transmembrane segment spans residues 10–30 (IVGIVGNVISFGLFCAPIPTM). Residues 10-95 (IVGIVGNVIS…YVTIFFVFAT (86 aa)) form the MtN3/slv 1 domain. Topologically, residues 31–45 (VKIWKMKSVSEFKPD) are cytoplasmic. A helical transmembrane segment spans residues 46-66 (PYVATVLNCMMWTFYGLPFVQ). The Extracellular portion of the chain corresponds to 67–72 (PDSLLV). Residues 73-93 (ITINGTGLFMELVYVTIFFVF) form a helical membrane-spanning segment. Residues 94–103 (ATSPVRRKIT) are Cytoplasmic-facing. The helical transmembrane segment at 104–124 (IAMVIEVIFMAVVIFCTMYFL) threads the bilayer. Topologically, residues 125-131 (HTTKQRS) are extracellular. Residues 132–152 (MLIGILCIVFNVIMYAAPLTV) traverse the membrane as a helical segment. Residues 133-217 (LIGILCIVFN…IIYITYYKTT (85 aa)) enclose the MtN3/slv 2 domain. The Cytoplasmic portion of the chain corresponds to 153–165 (MKLVIKTKSVKYM). Residues 166 to 186 (PFFLSLANFMNGVVWVIYACL) traverse the membrane as a helical segment. The Extracellular portion of the chain corresponds to 187 to 190 (KFDP). A helical transmembrane segment spans residues 191-211 (YILIPNGLGSLSGIIQLIIYI). The Cytoplasmic segment spans residues 212–240 (TYYKTTNWNDDDEDKEKRYSNAGIELGQA).

Belongs to the SWEET sugar transporter family. As to quaternary structure, forms homooligomers and heterooligomers with SWEET6, SWEET8, SWEET9, SWEET11 and SWEET12.

It is found in the cell membrane. Its function is as follows. Mediates both low-affinity uptake and efflux of sugar across the plasma membrane. May play roles in nurturing the male gametophyte. This chain is Bidirectional sugar transporter SWEET5, found in Arabidopsis thaliana (Mouse-ear cress).